A 506-amino-acid chain; its full sequence is MEEFQVYLELDRFRQHDFLYPLIFREYIYALAHDHSLNINNRSGLLENVSSANKYKYSSVIVKRFIFRMYQQNHLIISANDSNQKQFFGHNNNLYYEMISAVFAVIAEIPFSLRLVSSLKGKGPAKSHNLQSIHSIFPFLEDTFSHLNYVLDVLIPYPIHLETLVQTLRYWIKDTSSLHLLRFCLYEYCNWNWKSLITQKKSILNPRLFLFLYNSHVCEYESIFFFLRNQSSHLRSTSFGVLLERILFYGKIEHLIKVFVNDFQDILWLVKDPFMHYIRYQGKSILASKDTPLLMNKWKYYFVSLWQCHFYVWSQSRRVRIKQLSKDYLDFLGYFSSLRFNPLVVRSQMLENSFLIDNAIKKFDTKIPIIPMIGSLAKARFCNALGHPISKPAWADSADSDIIDRFVRICRNLSHYYSGSSKKKNLYRIKYILRLSCVKTLARKHKSTVRTFLKRVGSGFLEEFFTEEEEVLSLIFPRAYSASRKLYRGHIWYLDIICINDLVNHE.

The protein belongs to the intron maturase 2 family. MatK subfamily.

The protein localises to the plastid. Its subcellular location is the chloroplast. Usually encoded in the trnK tRNA gene intron. Probably assists in splicing its own and other chloroplast group II introns. This is Maturase K from Carica papaya (Papaya).